A 328-amino-acid chain; its full sequence is Lipoate--protein ligase 1 (328 aa).

The 188-residue stretch at 27 to 214 (PAEESYFLFY…TIFGETEVEE (188 aa)) folds into the BPL/LPL catalytic domain. ATP contacts are provided by residues arginine 69, 74-77 (GAVY), and lysine 131. Lysine 131 provides a ligand contact to (R)-lipoate.

The catalysed reaction is L-lysyl-[lipoyl-carrier protein] + (R)-lipoate + ATP = N(6)-[(R)-lipoyl]-L-lysyl-[lipoyl-carrier protein] + AMP + diphosphate + H(+). It participates in protein modification; protein lipoylation via exogenous pathway; protein N(6)-(lipoyl)lysine from lipoate: step 1/2. Its pathway is protein modification; protein lipoylation via exogenous pathway; protein N(6)-(lipoyl)lysine from lipoate: step 2/2. In terms of biological role, catalyzes the lipoylation of proteins, such as GcvH (SAV0833) and GcvH-L (SAV0324), likely via the ATP-dependent activation of lipoate to lipoyl-AMP and the transfer of the activated lipoyl onto the lipoyl domain of the target protein. The protein is Lipoate--protein ligase 1 of Staphylococcus aureus (strain Mu50 / ATCC 700699).